The following is a 179-amino-acid chain: MASVTALIIASIVTVAHGQTIVHITLGHNHTLVGPPITSEVIWTKLGSVDYFDIICNKTKPIFVICNRQNLTLINVSKIYNGYYYGYDRSSSQYKNYLVRITQPKLTVPTMTIIKMANKALENFTSPTTPNEKNIPNSMIAIIAAVALGMALIIICMLLYACYYKKFQHKQDPLLNFNI.

N-linked (GlcNAc...) asparagine; by host glycosylation is found at Asn-29, Asn-57, Asn-70, Asn-75, and Asn-123.

It belongs to the adenoviridae E3_20 family.

Functionally, E3 proteins seem to be dispensable for virus growth in tissue culture cells. They are potentially important for virus growth under special conditions; E3 region may help adenoviruses to evade the immune surveillance of the host. This Homo sapiens (Human) protein is Early E3 20.1 kDa glycoprotein.